The following is a 393-amino-acid chain: uncharacterized protein (393 aa).

Cysteine 72, cysteine 82, cysteine 85, and cysteine 160 together coordinate [4Fe-4S] cluster. Positions 215, 245, 267, and 313 each coordinate S-adenosyl-L-methionine. The active-site Nucleophile is cysteine 340.

It belongs to the class I-like SAM-binding methyltransferase superfamily. RNA M5U methyltransferase family.

This is an uncharacterized protein from Nitrosomonas europaea (strain ATCC 19718 / CIP 103999 / KCTC 2705 / NBRC 14298).